Consider the following 1016-residue polypeptide: Enhancer of polycomb-like protein 1 (1016 aa).

Disordered regions lie at residues 1-50, 96-119, 450-488, 499-518, and 842-1016; these read MAIH…NDLE, LLGS…DASV, KEED…TIGT, GQVH…VKLP, and ARMR…PNRK. Over residues 35–50 the composition is skewed to polar residues; that stretch reads YKQSDLPTLNASNDLE. Basic and acidic residues-rich tracts occupy residues 103–116 and 457–473; these read DGDK…KKTD and ESSK…DSSR. Residues 475-488 show a composition bias toward polar residues; the sequence is GSATSMPGSATIGT. Positions 842–883 are enriched in low complexity; it reads ARMRTLQQQQRNNKQQAAGQSSGSSSASLGSNTNSNSSISGQ. Positions 884 to 902 are enriched in polar residues; that stretch reads ADQGQTNLTNSGITRQGGA. The span at 904–923 shows a compositional bias: low complexity; it reads VNGSQTSTTNNTRSSVSGGS. Over residues 928-956 the composition is skewed to polar residues; sequence LPTQSSQRSNTNSPLLASQPQGYSQQQKF. Over residues 960–971 the composition is skewed to low complexity; it reads PPTSQSQSQSPT. Residues 976 to 994 are compositionally biased toward polar residues; sequence QLQTSKMYNKHGSNITPSN.

It belongs to the enhancer of polycomb family. Component of the NuA4 histone acetyltransferase complex.

The protein resides in the nucleus. In terms of biological role, component of the NuA4 histone acetyltransferase complex which is involved in transcriptional activation of selected genes principally by acetylation of nucleosomal histone H4 and H2A. The NuA4 complex is also involved in DNA repair. Involved in gene silencing by neighboring heterochromatin, blockage of the silencing spreading along the chromosome, and required for cell cycle progression through G2/M. This chain is Enhancer of polycomb-like protein 1 (EPL1), found in Debaryomyces hansenii (strain ATCC 36239 / CBS 767 / BCRC 21394 / JCM 1990 / NBRC 0083 / IGC 2968) (Yeast).